Reading from the N-terminus, the 160-residue chain is CXXC motif containing zinc binding protein (160 aa).

C33, C36, C67, and C70 together coordinate Zn(2+). S75 carries the phosphoserine modification.

Belongs to the UPF0587 family. In terms of assembly, monomer.

This Rattus norvegicus (Rat) protein is CXXC motif containing zinc binding protein.